A 644-amino-acid chain; its full sequence is Chaperone protein HtpG (644 aa).

The tract at residues 1–352 (MNARVEQLEF…AQDMSLNVSR (352 aa)) is a; substrate-binding. Residues 353–566 (EILQQDRQIK…AFGITPALAR (214 aa)) form a b region. Residues 567-644 (LYRASGQDIP…ILADRLARTL (78 aa)) are c.

The protein belongs to the heat shock protein 90 family. As to quaternary structure, homodimer.

The protein localises to the cytoplasm. Functionally, molecular chaperone. Has ATPase activity. In Mycobacterium avium (strain 104), this protein is Chaperone protein HtpG.